A 100-amino-acid chain; its full sequence is MTLTKAELADLLFDQVGLNKREAKDMVESFFEEIRLALESGDSVKLSGFGNFQLRDKPQRPGRNPKTGEEIPITARRVVTFHASQKLKGMVEQYHANKQG.

A disordered region spans residues 50-70 (GNFQLRDKPQRPGRNPKTGEE).

The protein belongs to the bacterial histone-like protein family. In terms of assembly, heterodimer of an alpha and a beta chain.

Functionally, this protein is one of the two subunits of integration host factor, a specific DNA-binding protein that functions in genetic recombination as well as in transcriptional and translational control. The protein is Integration host factor subunit alpha of Chromobacterium violaceum (strain ATCC 12472 / DSM 30191 / JCM 1249 / CCUG 213 / NBRC 12614 / NCIMB 9131 / NCTC 9757 / MK).